Here is a 502-residue protein sequence, read N- to C-terminus: Lysine--tRNA ligase (502 aa).

Residues 1-22 (MSDHEQAQAQSQDENQIMAERR) form a disordered region. Mg(2+) is bound by residues glutamate 413 and glutamate 420.

This sequence belongs to the class-II aminoacyl-tRNA synthetase family. Homodimer. It depends on Mg(2+) as a cofactor.

The protein resides in the cytoplasm. The enzyme catalyses tRNA(Lys) + L-lysine + ATP = L-lysyl-tRNA(Lys) + AMP + diphosphate. The protein is Lysine--tRNA ligase of Chromobacterium violaceum (strain ATCC 12472 / DSM 30191 / JCM 1249 / CCUG 213 / NBRC 12614 / NCIMB 9131 / NCTC 9757 / MK).